The sequence spans 350 residues: MEMINKENLSSQAKLWNFIYGFADSLVLKSAVQLDLANIIHNHGSPMTLSELSLHLPSQPVNQDALYRVLRYLVHMKLFTKSSIDGELRYGLAPPAKFLVKGWDKCMLGAILTITDKDFMAPWHYLKEGILNDGSTSTAFEKALGTNIWDYMAEHPEKNQLFNEGMANDTRLIMSALVKECSSMFDGITTIVDVGGGTGTAVRNIAKAFPHIKCTVYDLPHVIADSPGYTEINSIQGDMFKYIPNADAIMMKCILHDWDDKECIEILKRCKDAVPRDGGKVIIIDIILDVKSEHPYTKMRLTLDLDMMLNTGGKERTEEEWKKLIHDAGYKGYKITHISAVQSVIEAYPY.

Position 166 (Met166) interacts with S-adenosyl-L-methionine. Position 169 (Asp169) interacts with substrate. S-adenosyl-L-methionine-binding positions include Thr170, Gly195, Asp218, 238–239 (DM), and Lys252. Substrate contacts are provided by residues 253–257 (CILHD) and Asp306. Catalysis depends on His256, which acts as the Proton acceptor.

It belongs to the class I-like SAM-binding methyltransferase superfamily. Cation-independent O-methyltransferase family. COMT subfamily. Homodimer. In terms of tissue distribution, expressed in leaf primordia of rhizomes and root endodermis.

It catalyses the reaction (S)-norcoclaurine + S-adenosyl-L-methionine = (S)-coclaurine + S-adenosyl-L-homocysteine + H(+). The catalysed reaction is norcoclaurine + S-adenosyl-L-methionine = coclaurine + S-adenosyl-L-homocysteine + H(+). Its activity is regulated as follows. Inhibited by sanguinarine. Functionally, involved in the biosynthesis of coclaurine, a precursor of benzylisoquinoline alkaloids. Catalyzes the transfer of the S-methyl group of S-adenosyl-L-methionine (AdoMet) to the 6-hydroxyl group of norcoclaurine to form coclaurine. The sequence is that of (RS)-norcoclaurine 6-O-methyltransferase from Thalictrum flavum subsp. glaucum (Yellow meadow rue).